A 709-amino-acid polypeptide reads, in one-letter code: PP2C-like domain-containing protein CG9801 (709 aa).

Disordered regions lie at residues 121-222, 503-530, and 678-709; these read DCYG…NSER, LHPS…SRPK, and GGGE…ETNF. The segment covering 130–143 has biased composition (polar residues); the sequence is PPVQVATQNSTRLT. Positions 182-196 are enriched in low complexity; that stretch reads ANLAAASAGTDAGKA. A compositionally biased stretch (polar residues) spans 197 to 217; that stretch reads NSDQNNRNVLNAKTEVSTDGD. Positions 259-503 constitute a PPM-type phosphatase domain; that stretch reads SVSLYETNML…KSASAIYARL (245 aa).

This Drosophila melanogaster (Fruit fly) protein is PP2C-like domain-containing protein CG9801.